Consider the following 207-residue polypeptide: Large ribosomal subunit protein uL4 (207 aa).

The tract at residues 56–77 (FVSGGGKKPWRQKGTGRARHGS) is disordered. Residues 63–77 (KPWRQKGTGRARHGS) show a composition bias toward basic residues.

Belongs to the universal ribosomal protein uL4 family. Part of the 50S ribosomal subunit.

Functionally, one of the primary rRNA binding proteins, this protein initially binds near the 5'-end of the 23S rRNA. It is important during the early stages of 50S assembly. It makes multiple contacts with different domains of the 23S rRNA in the assembled 50S subunit and ribosome. Forms part of the polypeptide exit tunnel. The sequence is that of Large ribosomal subunit protein uL4 from Phytoplasma australiense.